A 117-amino-acid polypeptide reads, in one-letter code: Conotoxin vil14a (117 aa).

A signal peptide spans 1-22; the sequence is MGFRVLVLVVMATTSALPFTFS. The propeptide occupies 23–90; it reads EEPGRSPFRP…FAETPVGQKR (68 aa). The interval 53–86 is disordered; that stretch reads RADGQPPDMRQPEMRRPEMRRPEVRQPEFAETPV. Basic and acidic residues predominate over residues 62-80; the sequence is RQPEMRRPEMRRPEVRQPE. Cystine bridges form between Cys96–Cys116 and Cys100–Cys112.

Belongs to the conotoxin R superfamily. As to expression, expressed by the venom duct.

The protein localises to the secreted. The chain is Conotoxin vil14a from Conus villepinii (Villepin's cone).